We begin with the raw amino-acid sequence, 305 residues long: Ornithine carbamoyltransferase (305 aa).

Carbamoyl phosphate contacts are provided by residues 52–55 (STRT), Q79, R103, and 130–133 (HPCQ). L-ornithine contacts are provided by residues N161, D221, and 225–226 (SM). Carbamoyl phosphate contacts are provided by residues 261–262 (CL) and R289.

Belongs to the aspartate/ornithine carbamoyltransferase superfamily. OTCase family.

It localises to the cytoplasm. The catalysed reaction is carbamoyl phosphate + L-ornithine = L-citrulline + phosphate + H(+). It functions in the pathway amino-acid biosynthesis; L-arginine biosynthesis; L-arginine from L-ornithine and carbamoyl phosphate: step 1/3. Its function is as follows. Reversibly catalyzes the transfer of the carbamoyl group from carbamoyl phosphate (CP) to the N(epsilon) atom of ornithine (ORN) to produce L-citrulline. The polypeptide is Ornithine carbamoyltransferase (Methanocorpusculum labreanum (strain ATCC 43576 / DSM 4855 / Z)).